The chain runs to 245 residues: Orotidine 5'-phosphate decarboxylase (245 aa).

Substrate-binding positions include Asp-22, Lys-44, 71 to 80 (DLKFHDIPNT), Thr-131, Arg-192, Gln-201, Gly-221, and Arg-222. Lys-73 (proton donor) is an active-site residue.

It belongs to the OMP decarboxylase family. Type 1 subfamily. As to quaternary structure, homodimer.

The enzyme catalyses orotidine 5'-phosphate + H(+) = UMP + CO2. Its pathway is pyrimidine metabolism; UMP biosynthesis via de novo pathway; UMP from orotate: step 2/2. In terms of biological role, catalyzes the decarboxylation of orotidine 5'-monophosphate (OMP) to uridine 5'-monophosphate (UMP). The sequence is that of Orotidine 5'-phosphate decarboxylase from Shigella dysenteriae serotype 1 (strain Sd197).